The sequence spans 864 residues: DNA mismatch repair protein MutS (864 aa).

607–614 (GPNMGGKS) provides a ligand contact to ATP.

This sequence belongs to the DNA mismatch repair MutS family.

Functionally, this protein is involved in the repair of mismatches in DNA. It is possible that it carries out the mismatch recognition step. This protein has a weak ATPase activity. The protein is DNA mismatch repair protein MutS of Neisseria gonorrhoeae (strain ATCC 700825 / FA 1090).